The sequence spans 586 residues: Arginine--tRNA ligase (586 aa).

A 'HIGH' region motif is present at residues 128-138 (ANPTGPLHVGH).

The protein belongs to the class-I aminoacyl-tRNA synthetase family. As to quaternary structure, monomer.

Its subcellular location is the cytoplasm. It carries out the reaction tRNA(Arg) + L-arginine + ATP = L-arginyl-tRNA(Arg) + AMP + diphosphate. The polypeptide is Arginine--tRNA ligase (Thioalkalivibrio sulfidiphilus (strain HL-EbGR7)).